A 955-amino-acid chain; its full sequence is Valine--tRNA ligase (955 aa).

Residues 41 to 51 carry the 'HIGH' region motif; it reads PNITGSLHMGH. Residues 554-558 carry the 'KMSKS' region motif; the sequence is KMSKS. Lysine 557 lines the ATP pocket. Positions 926-946 form a coiled coil; that stretch reads QEKNKLLKLNEINLKLSEQIK.

The protein belongs to the class-I aminoacyl-tRNA synthetase family. ValS type 1 subfamily. As to quaternary structure, monomer.

It is found in the cytoplasm. It catalyses the reaction tRNA(Val) + L-valine + ATP = L-valyl-tRNA(Val) + AMP + diphosphate. Its function is as follows. Catalyzes the attachment of valine to tRNA(Val). As ValRS can inadvertently accommodate and process structurally similar amino acids such as threonine, to avoid such errors, it has a 'posttransfer' editing activity that hydrolyzes mischarged Thr-tRNA(Val) in a tRNA-dependent manner. In Buchnera aphidicola subsp. Acyrthosiphon pisum (strain APS) (Acyrthosiphon pisum symbiotic bacterium), this protein is Valine--tRNA ligase.